The following is a 134-amino-acid chain: Profilin-3 (134 aa).

Residues C13 and C118 are joined by a disulfide bond. The Involved in PIP2 interaction signature appears at 84–100 (AVIRGKKGSGGITIKKT). The residue at position 114 (T114) is a Phosphothreonine.

Belongs to the profilin family. In terms of assembly, occurs in many kinds of cells as a complex with monomeric actin in a 1:1 ratio. Phosphorylated by MAP kinases.

The protein localises to the cytoplasm. Its subcellular location is the cytoskeleton. In terms of biological role, binds to actin and affects the structure of the cytoskeleton. At high concentrations, profilin prevents the polymerization of actin, whereas it enhances it at low concentrations. By binding to PIP2, it inhibits the formation of IP3 and DG. This Olea europaea (Common olive) protein is Profilin-3 (PRO3).